The chain runs to 715 residues: Palmitoyltransferase ZDHHC5 (715 aa).

The Cytoplasmic portion of the chain corresponds to 1-13; that stretch reads MPAESGKRFKPSK. Residues 14-34 form a helical membrane-spanning segment; sequence YVPVSAAAIFLVGATTLFFAF. The Extracellular portion of the chain corresponds to 35 to 52; the sequence is TCPGLSLDVSPAVPIYNA. A helical membrane pass occupies residues 53–73; it reads IMFLFVLANFSMATFMDPGIF. Residues 74 to 148 are Cytoplasmic-facing; that stretch reads PRAEEDEDKE…NCIGRRNYRY (75 aa). Residue tyrosine 91 is modified to Phosphotyrosine. Positions 104-154 constitute a DHHC domain; sequence KWCATCRFYRPPRCSHCSVCDNCVEEFDHHCPWVNNCIGRRNYRYFFLFLL. The active-site S-palmitoyl cysteine intermediate is the cysteine 134. Residues 149–169 traverse the membrane as a helical segment; the sequence is FFLFLLSLTAHIMGVFGFGLL. Residues 170–191 are Extracellular-facing; it reads YVLCHIEELSGVRTAVTMAVMC. The chain crosses the membrane as a helical span at residues 192 to 212; it reads VAGLFFIPVAGLTGFHVVLVA. The Cytoplasmic portion of the chain corresponds to 213-715; the sequence is RGRTTNEQVT…VGGTTYEISV (503 aa). Serine 247 is subject to Phosphoserine. The segment at 289–715 is disordered; the sequence is GELRRTKSKG…VGGTTYEISV (427 aa). A Phosphothreonine modification is found at threonine 294. Phosphoserine is present on residues serine 296 and serine 299. At threonine 303 the chain carries Phosphothreonine. Serine 345 bears the Phosphoserine mark. 2 positions are modified to phosphothreonine: threonine 348 and threonine 350. Residues 359–373 are compositionally biased toward low complexity; sequence SSSSTSAAMPHSSSA. Phosphoserine is present on residues serine 380, serine 398, serine 406, and serine 409. Phosphothreonine is present on threonine 411. Phosphoserine occurs at positions 415, 425, 429, and 432. Over residues 422 to 432 the composition is skewed to low complexity; that stretch reads SSGSRSSSLKS. Phosphothreonine is present on threonine 436. Over residues 442–478 the composition is skewed to polar residues; that stretch reads QLQSIRSEGTTSTSYKSLANQTRNGSLSYDSLLTPSD. 2 positions are modified to phosphoserine: serine 529 and serine 554. Low complexity predominate over residues 581 to 597; that stretch reads PRTSSSSDDSKRSPLSK. Arginine 617 carries the omega-N-methylarginine modification. Serine 621 bears the Phosphoserine mark. Threonine 659 bears the Phosphothreonine mark. The span at 666-677 shows a compositional bias: polar residues; sequence LKTTYSKSNGQP. Phosphoserine occurs at positions 684 and 694. At arginine 697 the chain carries Omega-N-methylarginine.

It belongs to the DHHC palmitoyltransferase family. ERF2/ZDHHC9 subfamily. Autopalmitoylated. Palmitoylation of the C-terminal tail regulates stimulation-dependent plasma membrane motility. In terms of processing, phosphorylation regulates association with endocytic proteins and its subcellular localization. Phosphorylation by LYN during fatty acid uptake leads to inactivation of the activity.

Its subcellular location is the cell membrane. It catalyses the reaction L-cysteinyl-[protein] + hexadecanoyl-CoA = S-hexadecanoyl-L-cysteinyl-[protein] + CoA. In terms of biological role, palmitoyltransferase that catalyzes the addition of palmitate onto various protein substrates such as CTNND2, CD36, GSDMD, NLRP3, NOD1, NOD2, STAT3 and S1PR1 thus plays a role in various biological processes including cell adhesion, inflammation, fatty acid uptake, bacterial sensing or cardiac functions. Plays an important role in the regulation of synapse efficacy by mediating palmitoylation of delta-catenin/CTNND2, thereby increasing synaptic delivery and surface stabilization of alpha-amino-3-hydroxy-5-methyl-4-isoxazole propionic acid receptors (AMPARs). Under basal conditions, remains at the synaptic membrane through FYN-mediated phosphorylation that prevents association with endocytic proteins. Neuronal activity enhances the internalization and trafficking of DHHC5 from spines to dendritic shafts where it palmitoylates delta-catenin/CTNND2. Regulates cell adhesion at the plasma membrane by palmitoylating GOLGA7B and DSG2. Plays a role in innate immune response by mediating the palmitoylation of NOD1 and NOD2 and their proper recruitment to the bacterial entry site and phagosomes. Also participates in fatty acid uptake by palmitoylating CD36 and thereby targeting it to the plasma membrane. Upon binding of fatty acids to CD36, gets phosphorylated by LYN leading to inactivation and subsequent CD36 caveolar endocytosis. Controls oligodendrocyte development by catalyzing STAT3 palmitoylation. Acts as a regulator of inflammatory response by mediating palmitoylation of NLRP3 and GSDMD. Palmitoylates NLRP3 to promote inflammasome assembly and activation. Activates pyroptosis by catalyzing palmitoylation of gasdermin-D (GSDMD), thereby promoting membrane translocation and pore formation of GSDMD. This is Palmitoyltransferase ZDHHC5 (Zdhhc5) from Rattus norvegicus (Rat).